A 156-amino-acid chain; its full sequence is Small ribosomal subunit protein uS7 (156 aa).

It belongs to the universal ribosomal protein uS7 family. As to quaternary structure, part of the 30S ribosomal subunit. Contacts proteins S9 and S11.

In terms of biological role, one of the primary rRNA binding proteins, it binds directly to 16S rRNA where it nucleates assembly of the head domain of the 30S subunit. Is located at the subunit interface close to the decoding center, probably blocks exit of the E-site tRNA. This Pseudomonas fluorescens (strain ATCC BAA-477 / NRRL B-23932 / Pf-5) protein is Small ribosomal subunit protein uS7.